Here is a 101-residue protein sequence, read N- to C-terminus: Urease subunit beta (101 aa).

The protein belongs to the urease beta subunit family. In terms of assembly, heterotrimer of UreA (gamma), UreB (beta) and UreC (alpha) subunits. Three heterotrimers associate to form the active enzyme.

It localises to the cytoplasm. It carries out the reaction urea + 2 H2O + H(+) = hydrogencarbonate + 2 NH4(+). It participates in nitrogen metabolism; urea degradation; CO(2) and NH(3) from urea (urease route): step 1/1. The protein is Urease subunit beta of Rhizobium etli (strain ATCC 51251 / DSM 11541 / JCM 21823 / NBRC 15573 / CFN 42).